The sequence spans 108 residues: UPF0060 membrane protein SAB2216c (108 aa).

4 helical membrane passes run 5-25 (IFIF…IWLW), 31-51 (CSLV…IATF), 60-80 (VYAA…MVVD), and 86-106 (KYDV…LLPS).

This sequence belongs to the UPF0060 family.

It localises to the cell membrane. The polypeptide is UPF0060 membrane protein SAB2216c (Staphylococcus aureus (strain bovine RF122 / ET3-1)).